The primary structure comprises 214 residues: Holliday junction branch migration complex subunit RuvA (214 aa).

A domain I region spans residues 1–68 (MIGFLQGKVL…QPKPVLIGFD (68 aa)). The segment at 69 to 146 (SAEEKDFFQL…RFLLAADEAG (78 aa)) is domain II. Residues 147–160 (AGDGVSKTGTPSLP) are flexible linker. Positions 161–214 (IQKAIDQVVDVLVQQLGHTPSAAKMMVAQALDRDPEIMTPEALFDEVYKGDVDA) are domain III.

Belongs to the RuvA family. In terms of assembly, homotetramer. Forms an RuvA(8)-RuvB(12)-Holliday junction (HJ) complex. HJ DNA is sandwiched between 2 RuvA tetramers; dsDNA enters through RuvA and exits via RuvB. An RuvB hexamer assembles on each DNA strand where it exits the tetramer. Each RuvB hexamer is contacted by two RuvA subunits (via domain III) on 2 adjacent RuvB subunits; this complex drives branch migration. In the full resolvosome a probable DNA-RuvA(4)-RuvB(12)-RuvC(2) complex forms which resolves the HJ.

Its subcellular location is the cytoplasm. Its function is as follows. The RuvA-RuvB-RuvC complex processes Holliday junction (HJ) DNA during genetic recombination and DNA repair, while the RuvA-RuvB complex plays an important role in the rescue of blocked DNA replication forks via replication fork reversal (RFR). RuvA specifically binds to HJ cruciform DNA, conferring on it an open structure. The RuvB hexamer acts as an ATP-dependent pump, pulling dsDNA into and through the RuvAB complex. HJ branch migration allows RuvC to scan DNA until it finds its consensus sequence, where it cleaves and resolves the cruciform DNA. The protein is Holliday junction branch migration complex subunit RuvA of Desulforapulum autotrophicum (strain ATCC 43914 / DSM 3382 / VKM B-1955 / HRM2) (Desulfobacterium autotrophicum).